The following is a 211-amino-acid chain: Claudin-1 (211 aa).

Over 1–7 (MANAGLQ) the chain is Cytoplasmic. A helical membrane pass occupies residues 8–28 (LLGFILASLGWIGSIVSTALP). Topologically, residues 29–81 (QWKIYSYAGDNIVTAQAIYEGLWMSCVSQSTGQIQCKVFDSLLNLNSTLQATR) are extracellular. A disulfide bridge links cysteine 54 with cysteine 64. A helical transmembrane segment spans residues 82 to 102 (ALMVIGILLGLIAIFVSTIGM). Over 103-115 (KCMRCLEDDEVQK) the chain is Cytoplasmic. Residues 116–136 (MWMAVIGGIIFLISGLATLVA) traverse the membrane as a helical segment. Residues 137-163 (TAWYGNRIVQEFYDPLTPINARYEFGQ) are Extracellular-facing. Residues 164-184 (ALFTGWAAASLCLLGGVLLSC) traverse the membrane as a helical segment. The Cytoplasmic segment spans residues 185–211 (SCPRKTTSYPTPRPYPKPTPSSGKDYV). Residues 190–211 (TTSYPTPRPYPKPTPSSGKDYV) form a disordered region. An interactions with TJP1, TJP2, TJP3 and PATJ region spans residues 210–211 (YV).

This sequence belongs to the claudin family. As to quaternary structure, can form homo- and heteropolymers with other CLDN. Homopolymers interact with CLDN3, but not CLDN2, homopolymers. Directly interacts with TJP1/ZO-1, TJP2/ZO-2 and TJP3/ZO-3. Interacts with MPDZ and PATJ. Interacts with OCLN, CD81, CLDN4, CLDN6 and CLDN9. In terms of tissue distribution, detected in epidermis and liver (at protein level). Widely expressed, with highest levels in liver and kidney.

The protein resides in the cell junction. Its subcellular location is the tight junction. It localises to the cell membrane. The protein localises to the basolateral cell membrane. Claudins function as major constituents of the tight junction complexes that regulate the permeability of epithelia. While some claudin family members play essential roles in the formation of impermeable barriers, others mediate the permeability to ions and small molecules. Often, several claudin family members are coexpressed and interact with each other, and this determines the overall permeability. CLDN1 is required to prevent the paracellular diffusion of small molecules through tight junctions in the epidermis and is required for the normal barrier function of the skin. Required for normal water homeostasis and to prevent excessive water loss through the skin, probably via an indirect effect on the expression levels of other proteins, since CLDN1 itself seems to be dispensable for water barrier formation in keratinocyte tight junctions. In Mus musculus (Mouse), this protein is Claudin-1 (Cldn1).